The chain runs to 335 residues: Holliday junction branch migration complex subunit RuvB (335 aa).

The tract at residues 1–181 (MDRIVEIEKY…FGMQFRLEFY (181 aa)) is large ATPase domain (RuvB-L). L20 contributes to the ATP binding site. 9 residues coordinate ADP: R21, Y28, I29, G62, L63, G64, K65, T66, and T67. ATP is bound by residues 128 to 130 (EDY) and R171. ADP is bound by residues Y181 and R218. Residues 182–252 (KDSELALILQ…RANEALNSLG (71 aa)) form a small ATPAse domain (RuvB-S) region. Positions 255–335 (ELGFDAMDLR…LNYEKTLFEE (81 aa)) are head domain (RuvB-H). DNA contacts are provided by R309 and R314.

This sequence belongs to the RuvB family. As to quaternary structure, homohexamer. Forms an RuvA(8)-RuvB(12)-Holliday junction (HJ) complex. HJ DNA is sandwiched between 2 RuvA tetramers; dsDNA enters through RuvA and exits via RuvB. An RuvB hexamer assembles on each DNA strand where it exits the tetramer. Each RuvB hexamer is contacted by two RuvA subunits (via domain III) on 2 adjacent RuvB subunits; this complex drives branch migration. In the full resolvosome a probable DNA-RuvA(4)-RuvB(12)-RuvC(2) complex forms which resolves the HJ.

Its subcellular location is the cytoplasm. It catalyses the reaction ATP + H2O = ADP + phosphate + H(+). Functionally, the RuvA-RuvB-RuvC complex processes Holliday junction (HJ) DNA during genetic recombination and DNA repair, while the RuvA-RuvB complex plays an important role in the rescue of blocked DNA replication forks via replication fork reversal (RFR). RuvA specifically binds to HJ cruciform DNA, conferring on it an open structure. The RuvB hexamer acts as an ATP-dependent pump, pulling dsDNA into and through the RuvAB complex. RuvB forms 2 homohexamers on either side of HJ DNA bound by 1 or 2 RuvA tetramers; 4 subunits per hexamer contact DNA at a time. Coordinated motions by a converter formed by DNA-disengaged RuvB subunits stimulates ATP hydrolysis and nucleotide exchange. Immobilization of the converter enables RuvB to convert the ATP-contained energy into a lever motion, pulling 2 nucleotides of DNA out of the RuvA tetramer per ATP hydrolyzed, thus driving DNA branch migration. The RuvB motors rotate together with the DNA substrate, which together with the progressing nucleotide cycle form the mechanistic basis for DNA recombination by continuous HJ branch migration. Branch migration allows RuvC to scan DNA until it finds its consensus sequence, where it cleaves and resolves cruciform DNA. The chain is Holliday junction branch migration complex subunit RuvB from Campylobacter jejuni subsp. jejuni serotype O:2 (strain ATCC 700819 / NCTC 11168).